Here is an 84-residue protein sequence, read N- to C-terminus: Large ribosomal subunit protein bL27 (84 aa).

It belongs to the bacterial ribosomal protein bL27 family.

In Kocuria rhizophila (strain ATCC 9341 / DSM 348 / NBRC 103217 / DC2201), this protein is Large ribosomal subunit protein bL27.